The following is a 137-amino-acid chain: Large ribosomal subunit protein uL16 (137 aa).

Belongs to the universal ribosomal protein uL16 family. In terms of assembly, part of the 50S ribosomal subunit.

Binds 23S rRNA and is also seen to make contacts with the A and possibly P site tRNAs. This chain is Large ribosomal subunit protein uL16, found in Streptococcus suis (strain 98HAH33).